The sequence spans 352 residues: Organic solute transporter subunit alpha (352 aa).

Residues 1 to 45 are Extracellular-facing; it reads MDVAHPEEVTRFSPDILMEKFNVSEACFLPPPISIQLILQLTWLD. N-linked (GlcNAc...) asparagine glycosylation is present at Asn-22. Residues 46–66 traverse the membrane as a helical segment; that stretch reads IGVFAALTAMTVLTIAIYLEI. Topologically, residues 67 to 82 are cytoplasmic; it reads VCYLMDKVKCPIKRKT. The chain crosses the membrane as a helical span at residues 83–103; that stretch reads LMWNSAAPTVIAITSCLGLWV. At 104 to 108 the chain is on the extracellular side; sequence PRAIM. Residues 109–129 form a helical membrane-spanning segment; that stretch reads FVDMAAAMYFGVGFYLMLLII. Residues 130-173 are Cytoplasmic-facing; sequence VQGYGGEEAMLQHLATHTIRISTGPCCCCCPCLPHIHLTRQKYK. Residues 174-194 traverse the membrane as a helical segment; that stretch reads IFVLGAFQVAFLRPALFLLGV. Residues 195–210 are Extracellular-facing; that stretch reads VLWTNGLYDPDDWSST. A helical membrane pass occupies residues 211 to 231; that stretch reads SIFLWLNLFLGVSTILGLWPV. Residues 232 to 250 are Cytoplasmic-facing; the sequence is NVLFRHSKVLMADQKLTCK. The helical transmembrane segment at 251 to 271 threads the bilayer; it reads FALFQAILILSSLQNSIIGTL. At 272-294 the chain is on the extracellular side; sequence AGAGHIGCAPPYSARTRGQQMNN. The chain crosses the membrane as a helical span at residues 295-312; it reads QLLIIEMFFVGILTRISY. Residues 313-352 are Cytoplasmic-facing; it reads RKRDDRPGHRHVGEVQQIVRECDQPAIADQQADHSSISHI.

Belongs to the OST-alpha family. As to quaternary structure, interacts with slc51b. The Ost-alpha/Ost-beta complex is a heterodimer composed of alpha (slc51a) and beta (slc51b) subunit. Expressed in liver.

The protein resides in the cell membrane. The protein localises to the endoplasmic reticulum membrane. It carries out the reaction taurocholate(out) = taurocholate(in). It catalyses the reaction prostaglandin E2(out) = prostaglandin E2(in). The enzyme catalyses estrone 3-sulfate(out) = estrone 3-sulfate(in). The catalysed reaction is dehydroepiandrosterone 3-sulfate(out) = dehydroepiandrosterone 3-sulfate(in). It carries out the reaction tauroursodeoxycholate(out) = tauroursodeoxycholate(in). It catalyses the reaction glycoursodeoxycholate(out) = glycoursodeoxycholate(in). The enzyme catalyses glycocholate(out) = glycocholate(in). The catalysed reaction is taurochenodeoxycholate(out) = taurochenodeoxycholate(in). It carries out the reaction glycochenodeoxycholate(out) = glycochenodeoxycholate(in). It catalyses the reaction taurodeoxycholate(out) = taurodeoxycholate(in). The enzyme catalyses glycodeoxycholate(out) = glycodeoxycholate(in). In terms of biological role, essential component of the Ost-alpha/Ost-beta complex, a heterodimer that acts as the intestinal basolateral transporter responsible for the translocation of bile acids (such as taurocholate), steroids (such as estrone sulfate), and eicosanoids (such as prostaglandin E2). The protein is Organic solute transporter subunit alpha (slc51a) of Leucoraja erinaceus (Little skate).